A 282-amino-acid chain; its full sequence is 4-diphosphocytidyl-2-C-methyl-D-erythritol kinase (282 aa).

Lysine 15 is an active-site residue. Position 98–108 (98–108 (PMGGGVGGGSS)) interacts with ATP. Aspartate 140 is a catalytic residue.

This sequence belongs to the GHMP kinase family. IspE subfamily.

The catalysed reaction is 4-CDP-2-C-methyl-D-erythritol + ATP = 4-CDP-2-C-methyl-D-erythritol 2-phosphate + ADP + H(+). Its pathway is isoprenoid biosynthesis; isopentenyl diphosphate biosynthesis via DXP pathway; isopentenyl diphosphate from 1-deoxy-D-xylulose 5-phosphate: step 3/6. Catalyzes the phosphorylation of the position 2 hydroxy group of 4-diphosphocytidyl-2C-methyl-D-erythritol. The protein is 4-diphosphocytidyl-2-C-methyl-D-erythritol kinase of Azoarcus sp. (strain BH72).